We begin with the raw amino-acid sequence, 310 residues long: Low affinity immunoglobulin gamma Fc region receptor II-b (310 aa).

A signal peptide spans methionine 1–glycine 42. Residues threonine 43–proline 217 are Extracellular-facing. 2 Ig-like C2-type domains span residues proline 48 to threonine 127 and glutamate 131 to threonine 213. Intrachain disulfides connect cysteine 71–cysteine 113 and cysteine 152–cysteine 196. N-linked (GlcNAc...) asparagine glycans are attached at residues asparagine 106, asparagine 180, and asparagine 187. Residues serine 218–alanine 240 form a helical membrane-spanning segment. At valine 241 to isoleucine 310 the chain is on the cytoplasmic side. The short motif at isoleucine 290–leucine 295 is the ITIM motif element. Tyrosine 292 bears the Phosphotyrosine; by SRC-type Tyr-kinases mark.

As to quaternary structure, interacts with INPP5D/SHIP1. Interacts with FGR. Interacts with LYN. (Microbial infection) Isoform IIB1 interacts with measles virus protein N. Protein N is released in the blood following lysis of measles infected cells. This interaction presumably block inflammatory immune response. Phosphorylated by the SRC-type Tyr-kinases LYN and BLK. As to expression, is the most broadly distributed Fc-gamma-receptor. Expressed in monocyte, neutrophils, macrophages, basophils, eosinophils, Langerhans cells, B-cells, platelets cells and placenta (endothelial cells). Not detected in natural killer cells.

The protein localises to the cell membrane. Functionally, receptor for the Fc region of complexed or aggregated immunoglobulins gamma. Low affinity receptor. Involved in a variety of effector and regulatory functions such as phagocytosis of immune complexes and modulation of antibody production by B-cells. Binding to this receptor results in down-modulation of previous state of cell activation triggered via antigen receptors on B-cells (BCR), T-cells (TCR) or via another Fc receptor. Isoform IIB1 fails to mediate endocytosis or phagocytosis. Isoform IIB2 does not trigger phagocytosis. The polypeptide is Low affinity immunoglobulin gamma Fc region receptor II-b (FCGR2B) (Homo sapiens (Human)).